A 385-amino-acid chain; its full sequence is Methionine aminopeptidase 1 (385 aa).

The C6H2-type zinc-finger motif lies at 6-59 (SRVCETEGCSSEAKLQCPTCIKLGIQGSYFCSQECFKGSWASHKLLHKKAKDDK). Positions 9, 14, 22, 25, 36, 40, 48, and 52 each coordinate Zn(2+). Histidine 203 provides a ligand contact to a protein. Zn(2+)-binding residues include aspartate 220, aspartate 231, and histidine 294. A protein is bound at residue histidine 301. Zn(2+) is bound by residues glutamate 327 and glutamate 358.

Belongs to the peptidase M24A family. Methionine aminopeptidase type 1 subfamily. In terms of assembly, associates with the 60S ribosomal subunit of the 80S translational complex. Zn(2+) serves as cofactor. Co(2+) is required as a cofactor. Requires Mn(2+) as cofactor. The cofactor is Fe(2+).

It is found in the cytoplasm. The enzyme catalyses Release of N-terminal amino acids, preferentially methionine, from peptides and arylamides.. In terms of biological role, cotranslationally removes the N-terminal methionine from nascent proteins. The N-terminal methionine is often cleaved when the second residue in the primary sequence is small and uncharged (Met-Ala-, Cys, Gly, Pro, Ser, Thr, or Val). The polypeptide is Methionine aminopeptidase 1 (metap1) (Xenopus tropicalis (Western clawed frog)).